Reading from the N-terminus, the 117-residue chain is Acidic phospholipase A2 (117 aa).

Intrachain disulfides connect C11–C70, C25–C116, C27–C43, C42–C98, C49–C91, C59–C84, and C77–C89. 3 residues coordinate Ca(2+): Y26, G28, and G30. The active site involves H46. D47 provides a ligand contact to Ca(2+). N-linked (GlcNAc...) asparagine glycosylation is present at N80. D92 is a catalytic residue.

Ca(2+) is required as a cofactor. As to expression, expressed by the venom gland.

Its subcellular location is the secreted. The catalysed reaction is a 1,2-diacyl-sn-glycero-3-phosphocholine + H2O = a 1-acyl-sn-glycero-3-phosphocholine + a fatty acid + H(+). Its function is as follows. Snake venom phospholipase A2 (PLA2) that shows strong myotoxicity and induces edema in mice. Shows no cytotoxicity in vitro. Has a strong anticoagulant effect in vitro. PLA2 catalyzes the calcium-dependent hydrolysis of the 2-acyl groups in 3-sn-phosphoglycerides. This chain is Acidic phospholipase A2, found in Micrurus dumerilii (Coral snake).